The following is a 559-amino-acid chain: Neutral amino acid transporter 9 (559 aa).

At 1 to 118 the chain is on the cytoplasmic side; that stretch reads MANVDSDSRH…YTEGYRKNTS (118 aa). A helical membrane pass occupies residues 119 to 139; sequence LVTIFMIWNTMMGTSILSIPW. The important for arginine binding and amino acid transport stretch occupies residues 128-133; that stretch reads TMMGTS. Serine 133 lines the arginine pocket. Over 140-145 the chain is Lumenal; it reads GIKQAG. A helical membrane pass occupies residues 146–166; sequence FTTGMCVIVLMGLLTLYCCYR. Residues 167-197 are Cytoplasmic-facing; the sequence is VVKSRSMIVTSDTTTWEYPDVCKHYFGSFGQ. The helical transmembrane segment at 198–224 threads the bilayer; it reads WSSLLFSLVSLIGAMIVYWVLMSNFLF. Over 225-281 the chain is Lumenal; it reads NTGKFIFNFIHHINDTDTVLSTNNSSPVICPSAGSGHPDNSSMIFYNSDTEVRLFER. N-linked (GlcNAc...) asparagine glycosylation is found at asparagine 238, asparagine 247, and asparagine 264. Cysteine 254 and cysteine 422 are oxidised to a cystine. A helical membrane pass occupies residues 282–298; it reads WWDKSKTVPFYLIGLLL. Over 299–307 the chain is Cytoplasmic; it reads PLLNFKSPS. Residues 308–332 traverse the membrane as a helical segment; the sequence is FFSKFNILGTVSVLYLIFIVTLKAI. Residues 333–354 lie on the Lumenal side of the membrane; it reads RLGFHLEFHWFAPTEFFVPEIR. The helical transmembrane segment at 355 to 375 threads the bilayer; the sequence is AQFPQLTGVLTLAFFIHNCII. Topologically, residues 376–392 are cytoplasmic; that stretch reads TLLKNNKNQENNVRDLC. The chain crosses the membrane as a helical span at residues 393–413; it reads IAYMLVTLTYLYIGVLVFASF. The Lumenal portion of the chain corresponds to 414–435; sequence PSPPLPKDCIEQNFLDNFPSSD. Residues 436-456 form a helical membrane-spanning segment; sequence TLSFIARICLLFQMMTVYPLL. The short motif at 442 to 452 is the CARC motif element; it reads RICLLFQMMTV. The CRAC motif signature appears at 455-461; the sequence is LLGYLAR. The Cytoplasmic segment spans residues 457–477; that stretch reads GYLARVQLLGHIFGDIYPSIF. Residues 478–498 traverse the membrane as a helical segment; the sequence is HVLILNLIIVGAGVTMACFYP. Over 499–505 the chain is Lumenal; that stretch reads NIGGIIR. The chain crosses the membrane as a helical span at residues 506–526; the sequence is YSGAACGLAFVFIYPSLIYIL. The Cytoplasmic segment spans residues 527-538; sequence SQHQEERLTWPK. The helical transmembrane segment at 539–559 threads the bilayer; it reads LVFHIIIIILGLANLIAQFFM.

The protein belongs to the amino acid/polyamine transporter 2 family. SLC38A9 subfamily. As to quaternary structure, associated component of the Ragulator complex (composed of LAMTOR1, LAMTOR2, LAMTOR3, LAMTOR4 and LAMTOR5). Associated component of the Rag GTPases heterodimers (composed of RRAGA, RRAGB, RRAGC and RRAGD); this interaction is independent of the Ragulator complex but depends on the nucleotide loading state of the Rag GTPase heterodimer. Interacts with TM4SF5. Interacts with NPC1; this interaction inhibits cholesterol-mediated mTORC1 activation via its sterol transport activity. Post-translationally, glycosylated.

The protein localises to the lysosome membrane. The protein resides in the late endosome membrane. The catalysed reaction is L-leucine(in) = L-leucine(out). It catalyses the reaction L-tyrosine(in) = L-tyrosine(out). The enzyme catalyses L-glutamine(out) = L-glutamine(in). It carries out the reaction L-asparagine(out) = L-asparagine(in). Functionally, lysosomal amino acid transporter involved in the activation of mTORC1 in response to amino acid levels. Probably acts as an amino acid sensor of the Rag GTPases and Ragulator complexes, 2 complexes involved in amino acid sensing and activation of mTORC1, a signaling complex promoting cell growth in response to growth factors, energy levels, and amino acids. Following activation by amino acids, the Ragulator and Rag GTPases function as a scaffold recruiting mTORC1 to lysosomes where it is in turn activated. SLC38A9 mediates transport of amino acids with low capacity and specificity with a slight preference for polar amino acids. Acts as an arginine sensor. Following activation by arginine binding, mediates transport of L-glutamine, leucine and tyrosine with high efficiency, and is required for the efficient utilization of these amino acids after lysosomal protein degradation. However, the transport mechanism is not well defined and the role of sodium is not clear. Can disassemble the lysosomal folliculin complex (LFC), and thereby triggers GAP activity of FLCN:FNIP2 toward RRAGC. Acts as an cholesterol sensor that conveys increases in lysosomal cholesterol, leading to lysosomal recruitment and activation of mTORC1 via the Rag GTPases. Guanine exchange factor (GEF) that, upon arginine binding, stimulates GDP release from RRAGA and therefore activates the Rag GTPase heterodimer and the mTORC1 pathway in response to nutrient sufficiency. The protein is Neutral amino acid transporter 9 of Rattus norvegicus (Rat).